Here is a 235-residue protein sequence, read N- to C-terminus: BPI fold-containing family A member 2 (235 aa).

An N-terminal signal peptide occupies residues Met1–Ser20. Cys161 and Cys204 are joined by a disulfide.

The protein belongs to the BPI/LBP/Plunc superfamily. Plunc family. As to expression, expressed in parotid, submandibular and sublingual glands.

It is found in the secreted. In terms of biological role, has strong antibacterial activity against P.aeruginosa. The protein is BPI fold-containing family A member 2 (Bpifa2) of Rattus norvegicus (Rat).